Consider the following 386-residue polypeptide: Interleukin-13 receptor subunit alpha-2 (386 aa).

An N-terminal signal peptide occupies residues 1-21 (MAFIHLDVGFLYTLLVCTAFG). Over 22–338 (SMLSNAEIKV…CWKGDIWKET (317 aa)) the chain is Extracellular. 3 Fibronectin type-III domains span residues 33–133 (PPQD…SPQG), 138–234 (KIQD…LQNI), and 239–338 (PPDY…WKET). C64 and C112 are disulfide-bonded. N-linked (GlcNAc...) asparagine glycosylation is present at N114. 2 cysteine pairs are disulfide-bonded: C144/C154 and C183/C196. N-linked (GlcNAc...) asparagine glycans are attached at residues N214 and N298. A disulfide bridge connects residues C268 and C315. A WSXWS motif motif is present at residues 321 to 325 (WSEWS). A helical membrane pass occupies residues 339-359 (LVFFLIPFAFVSIFVLVITCL). The Cytoplasmic portion of the chain corresponds to 360-386 (LLYKQRALLKTIFHTKKEVFSHQDTFC).

This sequence belongs to the type I cytokine receptor family. Type 5 subfamily. As to quaternary structure, interacts with IL4RA. Interacts with high affinity to interleukin-13 (IL13), but not to interleukin-4 (IL4). Post-translationally, cleaved by MMP8 leading to a soluble form that is also able to interact with IL13. Expressed in kidney, placenta, liver, skeletal muscle and thymus. Expression was not seen in whole blood and heart.

The protein resides in the cell membrane. Functionally, cell surface receptor that plays a role in the regulation of IL-13-mediated responses. Functions as a decoy receptor that inhibits IL-13- and IL-4-mediated signal transduction via the JAK-STAT pathway and thereby modulates immune responses and inflammation. Serves as a functional signaling receptor for IL-13 in an alternative pathway involving AP-1 ultimately leading to the production of TGFB1. This chain is Interleukin-13 receptor subunit alpha-2 (IL13RA2), found in Canis lupus familiaris (Dog).